Reading from the N-terminus, the 118-residue chain is Large ribosomal subunit protein bL20 (118 aa).

This sequence belongs to the bacterial ribosomal protein bL20 family.

Functionally, binds directly to 23S ribosomal RNA and is necessary for the in vitro assembly process of the 50S ribosomal subunit. It is not involved in the protein synthesizing functions of that subunit. This chain is Large ribosomal subunit protein bL20, found in Staphylococcus haemolyticus (strain JCSC1435).